The following is a 222-amino-acid chain: 7-cyano-7-deazaguanine synthase (222 aa).

9–19 (ISGGMDSALSA) lines the ATP pocket. Cysteine 188, cysteine 196, cysteine 199, and cysteine 202 together coordinate Zn(2+).

Belongs to the QueC family. Zn(2+) is required as a cofactor.

It catalyses the reaction 7-carboxy-7-deazaguanine + NH4(+) + ATP = 7-cyano-7-deazaguanine + ADP + phosphate + H2O + H(+). The protein operates within purine metabolism; 7-cyano-7-deazaguanine biosynthesis. Catalyzes the ATP-dependent conversion of 7-carboxy-7-deazaguanine (CDG) to 7-cyano-7-deazaguanine (preQ(0)). The sequence is that of 7-cyano-7-deazaguanine synthase from Sulfurovum sp. (strain NBC37-1).